A 934-amino-acid chain; its full sequence is Intimin (934 aa).

Residues 1 to 39 (MITHGCYTRTRHKHKLKKTLIMLSAGLGLFFYVNQNSFA) form the signal peptide. The segment at 40–153 (NGENYFKLGS…KLTKMSPDVT (114 aa)) is peptidoglycan-binding. The segment at 40–153 (NGENYFKLGS…KLTKMSPDVT (114 aa)) is sufficient for homodimerization. The segment at 40 to 212 (NGENYFKLGS…LQAWLQHYGT (173 aa)) is required for periplasmic localization. The 50-residue stretch at 63–112 (LFYTLKTGETVADLSKSQDINLSTIWSLNKHLYSSESEMMKAAPGQQIIL) folds into the LysM domain. The inverse autotransporter stretch occupies residues 210-411 (YGTAEVNLQS…LYSMQFRYQF (202 aa)). The tract at residues 402 to 411 (LYSMQFRYQF) is signature sequence for beta-barrel assembly machinery (BAM), which recognizes the unfolded beta-barrel in the periplasm. The segment at 437–449 (LVQRNNNIILEYK) is minimum linker residues necessary for formation of a heat-modifiable beta-barrel. Big-1 domains are found at residues 560 to 653 (VTDF…VIFF) and 660 to 753 (ITEI…VTFF). Residues 747 to 934 (ATEVTFFDEL…TPNVYAVCVE (188 aa)) form an intimin receptor Tir-binding region. The 47-residue stretch at 787-833 (ASGGDGTYSWYSENTSIATVDASGKVTLNGKGSVVIKATSGDKQTVS) folds into the BIG2 domain. An intrachain disulfide couples Cys858 to Cys932.

This sequence belongs to the intimin/invasin family. Homodimer. Interacts with Tir.

The protein resides in the cell outer membrane. An inverse autotransporter. Adhesin, which mediates attachment to the human intestine epithelial cells. Necessary for the production of attaching and effacing lesions on infected human tissue culture cells. Anchored to the outer membrane by binding to peptidoglycan (PGN) via its periplasmic domain, thus helping in receptor interactions during host invasion. PGN-binding may also aid in resisting mechanical and chemical stress during transit of the bacterium through the gastrointestinal tract of the host. The polypeptide is Intimin (Escherichia coli O157:H7).